Here is an 812-residue protein sequence, read N- to C-terminus: Protein FAM83G (812 aa).

An N-acetylalanine modification is found at Ala-2. Residues 2–312 form a DUF1669 region; that stretch reads AFSQVQCLDD…LYLMSQSVSL (311 aa). Residue Ser-4 is modified to Phosphoserine. Positions 76–119 are disordered; it reads PGSEDPRVSGRRPEPQDNGGADASEETSAAGGPPATETLPSLEY. Residues 79–90 are compositionally biased toward basic and acidic residues; that stretch reads EDPRVSGRRPEP. Phosphoserine occurs at positions 124, 127, and 356. Disordered stretches follow at residues 362–389, 455–509, and 521–812; these read KSSS…GDLS, ASAQ…KPRT, and SDIG…HKEP. Polar residues predominate over residues 455-467; that stretch reads ASAQHQLWKQSQG. Residues 471 to 480 are compositionally biased toward pro residues; the sequence is CPAPCPPPAP. Positions 545–562 are enriched in polar residues; it reads STASESEVPQQQHSSMTQ. A compositionally biased stretch (acidic residues) spans 576-586; that stretch reads LDEDEDDDDDY. The segment covering 589–598 has biased composition (low complexity); sequence LSDQDSLSGS. Phosphoserine is present on residues Ser-609, Ser-613, Ser-615, and Ser-649. Low complexity predominate over residues 721–731; it reads SSSKKASPAAA. Residues 761–772 are compositionally biased toward basic and acidic residues; the sequence is LRAELRATEEHA.

This sequence belongs to the FAM83 family. In terms of assembly, interacts with SMAD1 (via MH2 domain); in a SMAD4-independent manner. Directly interacts (via DUF1669) with casein kinase isoforms CSNK1A1 and CSNK1A1L. BMP signaling induces the phosphorylation by BMPR1A at Ser-609, Ser-613 and Ser-615. Phosphorylation at Ser-609 is necessary for the activation of SMAD4-independent BMP target genes such as NEDD9 and ASNS. In terms of processing, phosphorylated by CSNK1A1.

It localises to the cytoplasm. It is found in the cytosol. Its subcellular location is the nucleus. Functionally, substrate for type I BMP receptor kinase involved in regulation of some target genes of the BMP signaling pathway. Also regulates the expression of several non-BMP target genes, suggesting a role in other signaling pathways. This chain is Protein FAM83G (Fam83g), found in Mus musculus (Mouse).